The chain runs to 458 residues: ATP synthase subunit beta (458 aa).

148–155 (GGAGVGKT) lines the ATP pocket.

Belongs to the ATPase alpha/beta chains family. F-type ATPases have 2 components, CF(1) - the catalytic core - and CF(0) - the membrane proton channel. CF(1) has five subunits: alpha(3), beta(3), gamma(1), delta(1), epsilon(1). CF(0) has three main subunits: a(1), b(2) and c(9-12). The alpha and beta chains form an alternating ring which encloses part of the gamma chain. CF(1) is attached to CF(0) by a central stalk formed by the gamma and epsilon chains, while a peripheral stalk is formed by the delta and b chains.

Its subcellular location is the cell inner membrane. It catalyses the reaction ATP + H2O + 4 H(+)(in) = ADP + phosphate + 5 H(+)(out). Its function is as follows. Produces ATP from ADP in the presence of a proton gradient across the membrane. The catalytic sites are hosted primarily by the beta subunits. This is ATP synthase subunit beta from Stutzerimonas stutzeri (strain A1501) (Pseudomonas stutzeri).